The chain runs to 652 residues: ATP-dependent zinc metalloprotease FtsH 2 (652 aa).

The Cytoplasmic portion of the chain corresponds to 1 to 6 (MNKYRR). A helical membrane pass occupies residues 7 to 27 (GLALGALALAVFILIGVGISM). Residues 28 to 108 (RATPQPVNLT…PAGNGAISAD (81 aa)) lie on the Extracellular side of the membrane. The chain crosses the membrane as a helical span at residues 109 to 129 (LMLLLRILTIVAVGVVIFVLF). The Cytoplasmic portion of the chain corresponds to 130–652 (RRFGPSSIGT…RAAKPQIDRT (523 aa)). ATP is bound at residue 200-207 (GPPGTGKT). A Zn(2+)-binding site is contributed by H420. E421 is a catalytic residue. H424 and D496 together coordinate Zn(2+).

In the central section; belongs to the AAA ATPase family. This sequence in the C-terminal section; belongs to the peptidase M41 family. As to quaternary structure, homohexamer. Zn(2+) serves as cofactor.

It is found in the cell membrane. Functionally, acts as a processive, ATP-dependent zinc metallopeptidase for both cytoplasmic and membrane proteins. Plays a role in the quality control of integral membrane proteins. This Sphaerobacter thermophilus (strain ATCC 49802 / DSM 20745 / KCCM 41009 / NCIMB 13125 / S 6022) protein is ATP-dependent zinc metalloprotease FtsH 2.